We begin with the raw amino-acid sequence, 373 residues long: Mitochondrial fission regulator 2 (373 aa).

Position 136 is a phosphoserine (Ser136). Residues 151 to 179 (VSEAAIKKIAALEDELTSLRAQIAAIVAM) adopt a coiled-coil conformation. Disordered regions lie at residues 189 to 331 (GFIS…WDPV) and 346 to 373 (DDSF…GSRF). Residues 224 to 239 (SPPPLPPPPPPLPPPQ) show a composition bias toward pro residues. 2 stretches are compositionally biased toward basic and acidic residues: residues 275–287 (KKTD…ESQR) and 297–310 (VLKD…RPVE). 2 positions are modified to phosphoserine: Ser312 and Ser348. The segment covering 354–373 (RSWQGSPFSSPETSRNGSRF) has biased composition (polar residues).

Belongs to the MTFR1 family.

The protein resides in the mitochondrion. In terms of biological role, may play a role in mitochondrial aerobic respiration essentially in the testis. Can also promote mitochondrial fission. This Rattus norvegicus (Rat) protein is Mitochondrial fission regulator 2 (Mtfr2).